The following is a 443-amino-acid chain: MIMKRVVIAGTSSEVGKTVISTGIMKALSKKYNVQGYKVGPDYIDPTYHTIATGNKSRNLDSFFMNKEQIKYLFQKHSKDKDISVIEGVRGLYEGISAIDDIGSTASVAKALDSPIILLVNAKSLTRSAIAIIKGFMSFDNVKIKGVIFNFVRSENHIKKLKDAMSYYLPDIEIIGFIPRNEDFKVEGRHLGLVPTPENLKEIESKIVLWGELVEKYLDLDKIVEIADEDFEEVDDVFLWEVNENYKKIAVAYDKAFNFYYWDNFEALKENKAKIEFFSPLKDSEVPDADILYIGGGYPELFKEELSRNKEMIESIKEFDGYIYGECGGLMYITKSIDNVPMVGLLNCSAVMTKHVQGLSYVKAEFLEDCLIGRKGLKFKGHEFHYSKLVNIKEERFAYKIERGRGIINNLDGIFNGKVLAGYLHNHAVANPYFASSMVNFGE.

One can recognise a GATase cobBQ-type domain in the interval 248–433; the sequence is KIAVAYDKAF…LHNHAVANPY (186 aa). The Nucleophile role is filled by C327.

This sequence belongs to the CobB/CbiA family. It depends on Mg(2+) as a cofactor.

The catalysed reaction is cob(II)yrinate + 2 L-glutamine + 2 ATP + 2 H2O = cob(II)yrinate a,c diamide + 2 L-glutamate + 2 ADP + 2 phosphate + 2 H(+). It carries out the reaction Ni-sirohydrochlorin + 2 L-glutamine + 2 ATP + 2 H2O = Ni-sirohydrochlorin a,c-diamide + 2 L-glutamate + 2 ADP + 2 phosphate + 2 H(+). The protein operates within cofactor biosynthesis; adenosylcobalamin biosynthesis; cob(II)yrinate a,c-diamide from sirohydrochlorin (anaerobic route): step 10/10. Catalyzes the ATP-dependent amidation of the two carboxylate groups at positions a and c of cobyrinate, using either L-glutamine or ammonia as the nitrogen source. Involved in the biosynthesis of the unique nickel-containing tetrapyrrole coenzyme F430, the prosthetic group of methyl-coenzyme M reductase (MCR), which plays a key role in methanogenesis and anaerobic methane oxidation. Catalyzes the ATP-dependent amidation of the two carboxylate groups at positions a and c of Ni-sirohydrochlorin, using L-glutamine or ammonia as the nitrogen source. In Methanocaldococcus jannaschii (strain ATCC 43067 / DSM 2661 / JAL-1 / JCM 10045 / NBRC 100440) (Methanococcus jannaschii), this protein is Cobyrinate a,c-diamide synthase.